The primary structure comprises 98 residues: UPF0235 protein APJL_1398 (98 aa).

Belongs to the UPF0235 family.

This is UPF0235 protein APJL_1398 from Actinobacillus pleuropneumoniae serotype 3 (strain JL03).